The following is a 615-amino-acid chain: Dihydroxy-acid dehydratase (615 aa).

A Mg(2+)-binding site is contributed by aspartate 81. [2Fe-2S] cluster is bound at residue cysteine 122. Mg(2+) is bound by residues aspartate 123 and lysine 124. N6-carboxylysine is present on lysine 124. Cysteine 195 lines the [2Fe-2S] cluster pocket. Glutamate 491 contacts Mg(2+). Serine 517 (proton acceptor) is an active-site residue.

The protein belongs to the IlvD/Edd family. Homodimer. [2Fe-2S] cluster serves as cofactor. It depends on Mg(2+) as a cofactor.

It carries out the reaction (2R)-2,3-dihydroxy-3-methylbutanoate = 3-methyl-2-oxobutanoate + H2O. The catalysed reaction is (2R,3R)-2,3-dihydroxy-3-methylpentanoate = (S)-3-methyl-2-oxopentanoate + H2O. It participates in amino-acid biosynthesis; L-isoleucine biosynthesis; L-isoleucine from 2-oxobutanoate: step 3/4. It functions in the pathway amino-acid biosynthesis; L-valine biosynthesis; L-valine from pyruvate: step 3/4. In terms of biological role, functions in the biosynthesis of branched-chain amino acids. Catalyzes the dehydration of (2R,3R)-2,3-dihydroxy-3-methylpentanoate (2,3-dihydroxy-3-methylvalerate) into 2-oxo-3-methylpentanoate (2-oxo-3-methylvalerate) and of (2R)-2,3-dihydroxy-3-methylbutanoate (2,3-dihydroxyisovalerate) into 2-oxo-3-methylbutanoate (2-oxoisovalerate), the penultimate precursor to L-isoleucine and L-valine, respectively. This Shewanella pealeana (strain ATCC 700345 / ANG-SQ1) protein is Dihydroxy-acid dehydratase.